The sequence spans 381 residues: Arf-GAP with dual PH domain-containing protein 2 (381 aa).

The region spanning 9–132 (KRLLELLQAA…TAIDKAVSHP (124 aa)) is the Arf-GAP domain. Residues 25 to 48 (CADCGAADPDWASYKLGIFICLHC) form a C4-type zinc finger. 2 PH domains span residues 132–233 (PGNR…AARL) and 255–361 (NYLK…GVLS).

Its subcellular location is the cytoplasm. It localises to the cell membrane. Functionally, GTPase-activating protein for the ADP ribosylation factor family (Potential). Binds phosphatidylinositol 3,4,5-trisphosphate (PtdInsP3) and inositol 1,3,4,5-tetrakisphosphate (InsP4). Possesses a stoichiometry of two binding sites for InsP4 with identical affinity. The chain is Arf-GAP with dual PH domain-containing protein 2 (Adap2) from Mus musculus (Mouse).